Here is a 348-residue protein sequence, read N- to C-terminus: Protein RecA (348 aa).

65–72 lines the ATP pocket; it reads GPESSGKT. The segment covering 326–336 has biased composition (basic and acidic residues); it reads LLTPAEEKPET. The interval 326 to 348 is disordered; it reads LLTPAEEKPETDAAPEIEENEEF. The span at 338–348 shows a compositional bias: acidic residues; it reads AAPEIEENEEF.

The protein belongs to the RecA family.

It localises to the cytoplasm. Functionally, can catalyze the hydrolysis of ATP in the presence of single-stranded DNA, the ATP-dependent uptake of single-stranded DNA by duplex DNA, and the ATP-dependent hybridization of homologous single-stranded DNAs. It interacts with LexA causing its activation and leading to its autocatalytic cleavage. The polypeptide is Protein RecA (Aliivibrio fischeri (strain ATCC 700601 / ES114) (Vibrio fischeri)).